We begin with the raw amino-acid sequence, 833 residues long: ERAD-associated E3 ubiquitin-protein ligase component HRD3 (833 aa).

The N-terminal stretch at methionine 1–alanine 19 is a signal peptide. Asparagine 105, asparagine 127, and asparagine 146 each carry an N-linked (GlcNAc...) asparagine glycan. Residues threonine 107–serine 143 form a Sel1-like 1 repeat. Sel1-like repeat units follow at residues serine 147 to aspartate 184 and leucine 185 to lysine 220. Asparagine 424 and asparagine 607 each carry an N-linked (GlcNAc...) asparagine glycan. Sel1-like repeat units follow at residues threonine 592–serine 623 and alanine 624–glutamine 659. N-linked (GlcNAc...) asparagine glycans are attached at residues asparagine 688 and asparagine 713. The helical transmembrane segment at leucine 752–alanine 772 threads the bilayer. A disordered region spans residues glycine 789–asparagine 818. The segment covering glycine 796–aspartate 810 has biased composition (acidic residues).

It belongs to the sel-1 family. Interacts with HRD1.

The protein resides in the endoplasmic reticulum membrane. In terms of biological role, component of the endoplasmic reticulum quality control (ERQC) system involved in ubiquitin-dependent degradation of missfolded endoplasmic reticulum proteins. Component of the HRD1 ubiquitin ligase complex, which is part of the ERAD-L and ERAD-M pathways responsible for the rapid degradation of soluble lumenal and membrane proteins with misfolded lumenal domains (ERAD-L), or ER-membrane proteins with misfolded transmembrane domains (ERAD-M). ERAD-L substrates are ubiquitinated through HRD1 in conjunction with the E2 ubiquitin-conjugating enzymes UBC1 and UBC7-CUE1. Ubiquitinated substrates are then removed to the cytosol via the action of the UFD1-NPL4-CDC48/p97 (UNC) AAA ATPase complex and targeted to the proteasome. ERAD-M substrates are processed by the same HRD1-HRD3 core complex, but only a subset of the other components is required for ERAD-M. Stabilizes the HRD1 ubiquitin-protein ligase. Also has a function in recruiting misfolded protein substrates. This Candida glabrata (strain ATCC 2001 / BCRC 20586 / JCM 3761 / NBRC 0622 / NRRL Y-65 / CBS 138) (Yeast) protein is ERAD-associated E3 ubiquitin-protein ligase component HRD3 (HRD3).